We begin with the raw amino-acid sequence, 114 residues long: Putative pterin-4-alpha-carbinolamine dehydratase (114 aa).

This sequence belongs to the pterin-4-alpha-carbinolamine dehydratase family.

The catalysed reaction is (4aS,6R)-4a-hydroxy-L-erythro-5,6,7,8-tetrahydrobiopterin = (6R)-L-erythro-6,7-dihydrobiopterin + H2O. This is Putative pterin-4-alpha-carbinolamine dehydratase from Chlorobium luteolum (strain DSM 273 / BCRC 81028 / 2530) (Pelodictyon luteolum).